The sequence spans 2920 residues: Cadherin-related hmr-1 (2920 aa).

The signal sequence occupies residues 1 to 19 (MSWNILLILLISNLDEVLA). Topologically, residues 20 to 2779 (KTLLKLPSNA…AVSKLGISSP (2760 aa)) are extracellular. Asn-72, Asn-243, Asn-253, Asn-339, and Asn-508 each carry an N-linked (GlcNAc...) asparagine glycan. 14 Cadherin domains span residues 322-422 (SSRS…PPSF), 425-530 (SPLP…PPQF), 531-642 (AKQE…VPTF), 643-747 (TRPL…SAVF), 749-865 (PTSQ…KPEF), 871-979 (YSDI…SPQF), 980-1093 (ERPS…APKW), 1097-1211 (PDCK…VPQF), 1212-1335 (TVDL…APSF), 1336-1436 (EEQK…APQF), 1438-1546 (QQKY…SPIF), 1548-1661 (ERLF…APFF), 1662-1772 (EKTR…APHI), and 1772-1874 (IHGA…EPYT). 4 N-linked (GlcNAc...) asparagine glycosylation sites follow: Asn-658, Asn-685, Asn-715, and Asn-826. The N-linked (GlcNAc...) asparagine glycan is linked to Asn-1177. N-linked (GlcNAc...) asparagine glycosylation is present at Asn-1417. The N-linked (GlcNAc...) asparagine glycan is linked to Asn-1646. Residues Asn-1935, Asn-2224, and Asn-2232 are each glycosylated (N-linked (GlcNAc...) asparagine). The 38-residue stretch at 2246–2283 (APPACQHSLCHNDGVCHNTNPGFFCECRNDGLKGARCQ) folds into the EGF-like 1 domain. Cystine bridges form between Cys-2250-Cys-2261, Cys-2255-Cys-2270, and Cys-2272-Cys-2282. In terms of domain architecture, Laminin G-like spans 2284–2478 (GTTRSFGGNG…AFEQNSEKGC (195 aa)). Residues Asn-2307 and Asn-2332 are each glycosylated (N-linked (GlcNAc...) asparagine). Cystine bridges form between Cys-2452–Cys-2478, Cys-2501–Cys-2515, and Cys-2517–Cys-2526. In terms of domain architecture, EGF-like 2 spans 2492–2527 (SLNHCIHGDCFADVQGSGAMVAKCVCDPGWGGARCE). N-linked (GlcNAc...) asparagine glycosylation is present at Asn-2623. Residues 2780–2800 (AIILILVSLALLILLVMMMVV) form a helical membrane-spanning segment. Over 2801–2920 (YTRRSPGAFE…VTLESIESAQ (120 aa)) the chain is Cytoplasmic. Ser-2839 carries the phosphoserine modification. A disordered region spans residues 2858 to 2891 (IGGHPPHYPPRGMAPPKDDHELNSKIKDLETDQN). Residues 2873–2887 (PKDDHELNSKIKDLE) show a composition bias toward basic and acidic residues. A Phosphoserine modification is found at Ser-2909. Residue Thr-2912 is modified to Phosphothreonine. Ser-2915 and Ser-2918 each carry phosphoserine.

As to quaternary structure, monomer in solution. Isoform a is a component of a core catenin-cadherin complex consisting of hmr-1, hmp-1 and hmp-2; the complex localizes to adherens junctions. Isoform a interacts with hmp-2; the interaction is direct. Isoform a interacts (via intracellular domain) with jac-1. In terms of processing, phosphorylation at T-2912 increases the binding affinity for hmp-2. Sumoylated. Sumoylation prevents accumulation at adherens junctions and decreases the binding affinity for hmp-2. In terms of tissue distribution, expressed in epidermal cells (at protein level). As to expression, neuron-specific.

The protein localises to the cell membrane. The protein resides in the cell junction. It is found in the adherens junction. Its subcellular location is the cell projection. It localises to the dendrite. In terms of biological role, cadherins are calcium-dependent cell adhesion proteins. They preferentially interact with themselves in a homophilic manner in connecting cells; cadherins may thus contribute to the sorting of heterogeneous cell types. Required for adherens junction assembly and connecting adherens junctions to the cytoskeleton. Its function is as follows. Isoform a is required for cell migration during body enclosure and cell shape changes during body elongation. Required for proper localization of other junctional components, such as hmp-1, hmp-2, jac-1 and pac-1. Recruitment of pac-1 is required to establish cell polarity, independent of its role in cell adhesion. Required for primodial germ cell ingression and adherence to endodermal cells during gastrulation. Isoform b is involved in axonal guidance in a subset of motor neurons. The sequence is that of Cadherin-related hmr-1 from Caenorhabditis elegans.